The primary structure comprises 411 residues: Kelch domain-containing protein 10 (411 aa).

6 Kelch repeats span residues 72–133 (NLYV…LHGH), 135–186 (LLVF…IIHG), 187–239 (FLYV…HDGQ), 240–288 (RIYV…RRCH), 296–342 (EVFI…AVTP), and 345–388 (CMYI…YFPH).

This sequence belongs to the KLHDC10 family. In terms of assembly, component of a CRL2 E3 ubiquitin-protein ligase complex, also named ECS (Elongin BC-CUL2/5-SOCS-box protein) complex, composed of CUL2, Elongin BC (ELOB and ELOC), RBX1 and substrate-specific adapter KLHDC10.

It participates in protein modification; protein ubiquitination. Functionally, substrate-recognition component of a Cul2-RING (CRL2) E3 ubiquitin-protein ligase complex of the DesCEND (destruction via C-end degrons) pathway, which recognizes a C-degron located at the extreme C terminus of target proteins, leading to their ubiquitination and degradation. The C-degron recognized by the DesCEND pathway is usually a motif of less than ten residues and can be present in full-length proteins, truncated proteins or proteolytically cleaved forms. The CRL2(KLHDC10) complex specifically recognizes proteins with a proline-glycine (Pro-Gly) or an alanine tail (CAT tail) at the C-terminus, leading to their ubiquitination and degradation. The CRL2(KLHDC10) complex is involved in the ribosome-associated quality control (RQC) pathway, which mediates the extraction of incompletely synthesized nascent chains from stalled ribosomes: CRL2(KLHDC10) acts downstream of NEMF and recognizes CAT tails associated with stalled nascent chains, leading to their ubiquitination and degradation. The polypeptide is Kelch domain-containing protein 10 (Xenopus tropicalis (Western clawed frog)).